Consider the following 429-residue polypeptide: Probable E3 ubiquitin-protein ligase makorin-1 (429 aa).

C3H1-type zinc fingers lie at residues 18-45, 48-75, and 153-180; these read WTKH…HDLT, KPAA…HCKP, and ELRK…HGDV. Positions 181–208 are makorin-type Cys-His; sequence CDMCGLQVLHPTDSSQRSEHTKACIEAH. The RING-type zinc finger occupies 226-280; the sequence is CGVCMEVVFEKANPSERRFGILSNCSHCYCLKCIRKWRSAKQFESKIIKSCPECR. Residues 309 to 338 form a C3H1-type 4 zinc finger; the sequence is GMGRKPCRYFDEGRGICPFGANCFYKHAFP. The disordered stretch occupies residues 343-362; sequence EEAQPQRRQTGSSSRNRNSR. The segment covering 348 to 358 has biased composition (low complexity); it reads QRRQTGSSSRN.

The enzyme catalyses S-ubiquitinyl-[E2 ubiquitin-conjugating enzyme]-L-cysteine + [acceptor protein]-L-lysine = [E2 ubiquitin-conjugating enzyme]-L-cysteine + N(6)-ubiquitinyl-[acceptor protein]-L-lysine.. It participates in protein modification; protein ubiquitination. E3 ubiquitin ligase catalyzing the covalent attachment of ubiquitin moieties onto substrate proteins. The sequence is that of Probable E3 ubiquitin-protein ligase makorin-1 from Takifugu rubripes (Japanese pufferfish).